Consider the following 506-residue polypeptide: Nucleosome assembly protein 1-like 3 (506 aa).

2 disordered regions span residues Met-1–Asn-95 and Pro-157–Asp-307. Low complexity predominate over residues Ser-35–Ser-70. The segment covering Pro-157–Gln-178 has biased composition (acidic residues). Residues Pro-196–Lys-296 show a composition bias toward basic and acidic residues.

It belongs to the nucleosome assembly protein (NAP) family.

It localises to the nucleus. The polypeptide is Nucleosome assembly protein 1-like 3 (NAP1L3) (Homo sapiens (Human)).